A 699-amino-acid polypeptide reads, in one-letter code: MRWLLLYYALCFSLSKASAHTVELNNMFGQIQSPGYPDSYPSDSEVTWNITVPDGFRIKLYFMHFNLESSYLCEYDYVKVETEDQVLATFCGRETTDTEQTPGQEVVLSPGSFMSITFRSDFSNEERFTGFDAHYMAVDVDECKEREDEELSCDHYCHNYIGGYYCSCRFGYILHTDNRTCRVECSDNLFTQRTGVITSPDFPNPYPKSSECLYTIELEEGFMVNLQFEDIFDIEDHPEVPCPYDYIKIKVGPKVLGPFCGEKAPEPISTQSHSVLILFHSDNSGENRGWRLSYRAAGNECPELQPPVHGKIEPSQAKYFFKDQVLVSCDTGYKVLKDNVEMDTFQIECLKDGTWSNKIPTCKIVDCRAPGELEHGLITFSTRNNLTTYKSEIKYSCQEPYYKMLNNNTGIYTCSAQGVWMNKVLGRSLPTCLPVCGLPKFSRKLMARIFNGRPAQKGTTPWIAMLSHLNGQPFCGGSLLGSSWIVTAAHCLHQSLDPEDPTLRDSDLLSPSDFKIILGKHWRLRSDENEQHLGVKHTTLHPQYDPNTFENDVALVELLESPVLNAFVMPICLPEGPQQEGAMVIVSGWGKQFLQRFPETLMEIEIPIVDHSTCQKAYAPLKKKVTRDMICAGEKEGGKDACAGDSGGPMVTLNRERGQWYLVGTVSWGDDCGKKDRYGVYSYIHHNKDWIQRVTGVRN.

The first 19 residues, 1–19, serve as a signal peptide directing secretion; the sequence is MRWLLLYYALCFSLSKASA. The CUB 1 domain occupies 20-138; the sequence is HTVELNNMFG…TGFDAHYMAV (119 aa). The segment at 20 to 184 is homodimerization; sequence HTVELNNMFG…HTDNRTCRVE (165 aa). Residues 20–184 form an interaction with MBL2 region; the sequence is HTVELNNMFG…HTDNRTCRVE (165 aa). The segment at 20-278 is interaction with FCN2; sequence HTVELNNMFG…STQSHSVLIL (259 aa). A glycan (N-linked (GlcNAc...) asparagine) is linked at Asn-49. The Ca(2+) site is built by Glu-68, Asp-76, Asp-121, Ser-123, Asp-139, Val-140, and Glu-142. Cys-73 and Cys-91 are disulfide-bonded. One can recognise an EGF-like; calcium-binding domain in the interval 139-182; sequence DVDECKEREDEELSCDHYCHNYIGGYYCSCRFGYILHTDNRTCR. 4 cysteine pairs are disulfide-bonded: Cys-143/Cys-157, Cys-153/Cys-166, Cys-168/Cys-181, and Cys-185/Cys-212. Ca(2+) is bound by residues Asn-159, Tyr-160, and Gly-163. Position 159 is a (3R)-3-hydroxyasparagine (Asn-159). An N-linked (GlcNAc...) (complex) asparagine glycan is attached at Asn-178. One can recognise a CUB 2 domain in the interval 185-297; sequence CSDNLFTQRT…RGWRLSYRAA (113 aa). The Ca(2+) site is built by Glu-235, Asp-245, Asp-282, and Ser-284. An intrachain disulfide couples Cys-242 to Cys-260. 2 consecutive Sushi domains span residues 299 to 364 and 365 to 434; these read NECP…TCKI and VDCR…TCLP. Cystine bridges form between Cys-301–Cys-349, Cys-329–Cys-362, Cys-367–Cys-414, Cys-397–Cys-432, Cys-436–Cys-572, and Cys-475–Cys-491. An N-linked (GlcNAc...) (complex) asparagine glycan is attached at Asn-385. Asn-407 carries an N-linked (GlcNAc...) asparagine glycan. The 248-residue stretch at 449–696 folds into the Peptidase S1 domain; the sequence is IFNGRPAQKG…NKDWIQRVTG (248 aa). His-490 acts as the Charge relay system in catalysis. Leu-533 carries an N-linked (GlcNAc) asparagine glycan. Catalysis depends on Asp-552, which acts as the Charge relay system. An N-linked (GlcNAc) asparagine glycan is attached at Glu-599. Intrachain disulfides connect Cys-614–Cys-631 and Cys-642–Cys-672. Residue Ser-646 is the Charge relay system of the active site.

This sequence belongs to the peptidase S1 family. In terms of assembly, homodimer. Interacts with the oligomeric lectins MBL2, FCN2 and FCN3; triggers the lectin pathway of complement through activation of C3. Interacts with SERPING1. Interacts with COLEC11; probably triggers the lectin pathway of complement. In terms of processing, the iron and 2-oxoglutarate dependent 3-hydroxylation of aspartate and asparagine is (R) stereospecific within EGF domains. N-glycosylated. Some N-linked glycan are of the complex-type. Post-translationally, autoproteolytic processing of the proenzyme produces the active enzyme composed on the heavy and the light chain held together by a disulfide bond. Isoform 1 but not isoform 2 is activated through autoproteolytic processing. Protein of the plasma which is primarily expressed by liver.

The protein localises to the secreted. Its activity is regulated as follows. Inhibited by SERPING1 and A2M. Its function is as follows. Functions in the lectin pathway of complement, which performs a key role in innate immunity by recognizing pathogens through patterns of sugar moieties and neutralizing them. The lectin pathway is triggered upon binding of mannan-binding lectin (MBL) and ficolins to sugar moieties which leads to activation of the associated proteases MASP1 and MASP2. Functions as an endopeptidase and may activate MASP2 or C2 or directly activate C3 the key component of complement reaction. Isoform 2 may have an inhibitory effect on the activation of the lectin pathway of complement or may cleave IGFBP5. Also plays a role in development. The chain is Mannan-binding lectin serine protease 1 (MASP1) from Homo sapiens (Human).